A 166-amino-acid chain; its full sequence is Lipoprotein signal peptidase (166 aa).

Transmembrane regions (helical) follow at residues 11-31 (LNLV…LYIL), 42-62 (IYIT…AFGL), 69-89 (VIYN…IFMM), and 99-119 (FFAL…VYTA). Residues D122 and D140 contribute to the active site. The helical transmembrane segment at 133 to 153 (WFVFNVADIFITIGVFCLILV) threads the bilayer.

This sequence belongs to the peptidase A8 family.

The protein resides in the cell inner membrane. It carries out the reaction Release of signal peptides from bacterial membrane prolipoproteins. Hydrolyzes -Xaa-Yaa-Zaa-|-(S,diacylglyceryl)Cys-, in which Xaa is hydrophobic (preferably Leu), and Yaa (Ala or Ser) and Zaa (Gly or Ala) have small, neutral side chains.. Its pathway is protein modification; lipoprotein biosynthesis (signal peptide cleavage). Its function is as follows. This protein specifically catalyzes the removal of signal peptides from prolipoproteins. The chain is Lipoprotein signal peptidase from Pelagibacter ubique (strain HTCC1062).